We begin with the raw amino-acid sequence, 217 residues long: MNKLITVAIDGPAGAGKSTIAKIIGEKFNLMYINTGSMYRAVTLKALENNISAEEVDKLLVMIDGMDMHFENDELILNGENINSLITMPNISKNVSAYASIREVRERLVNLMRKMALKYSVIMDGRDIGTVVLKDANFKFFLTASPEERADRRYKELMEKGIEVNYNEILQDIIKRDYLDSNREVDPLRKAEDAIEIDTTGIGIMGVVEKISSYMEK.

Residue 11-19 (GPAGAGKST) participates in ATP binding.

This sequence belongs to the cytidylate kinase family. Type 1 subfamily.

Its subcellular location is the cytoplasm. It catalyses the reaction CMP + ATP = CDP + ADP. The catalysed reaction is dCMP + ATP = dCDP + ADP. This is Cytidylate kinase from Clostridium perfringens (strain SM101 / Type A).